The chain runs to 319 residues: L-lactate dehydrogenase 2 (319 aa).

Residues V16, D37, K42, Y68, and 82-83 (GA) contribute to the NAD(+) site. Residues Q85 and R91 each coordinate substrate. NAD(+)-binding positions include S104, 121 to 123 (AAN), and S146. Residue 123-126 (NPVD) coordinates substrate. A substrate-binding site is contributed by 151–154 (DSAR). Residue H178 is the Proton acceptor of the active site. Residue Y222 is modified to Phosphotyrosine. T231 contacts substrate.

It belongs to the LDH/MDH superfamily. LDH family. In terms of assembly, homotetramer.

The protein localises to the cytoplasm. The enzyme catalyses (S)-lactate + NAD(+) = pyruvate + NADH + H(+). The protein operates within fermentation; pyruvate fermentation to lactate; (S)-lactate from pyruvate: step 1/1. In terms of biological role, catalyzes the conversion of lactate to pyruvate (Potential). Contributes to S.aureus growth during nitrosative stress in both aerobically and anaerobically cultured cells, despite playing a secondary role in this resistance mechanism. The chain is L-lactate dehydrogenase 2 from Staphylococcus aureus (strain Mu3 / ATCC 700698).